The chain runs to 189 residues: Peptidyl-tRNA hydrolase (189 aa).

Tyrosine 18 is a tRNA binding site. The active-site Proton acceptor is the histidine 23. TRNA-binding residues include phenylalanine 67, asparagine 69, and asparagine 115.

It belongs to the PTH family. Monomer.

It localises to the cytoplasm. It catalyses the reaction an N-acyl-L-alpha-aminoacyl-tRNA + H2O = an N-acyl-L-amino acid + a tRNA + H(+). Functionally, hydrolyzes ribosome-free peptidyl-tRNAs (with 1 or more amino acids incorporated), which drop off the ribosome during protein synthesis, or as a result of ribosome stalling. Catalyzes the release of premature peptidyl moieties from peptidyl-tRNA molecules trapped in stalled 50S ribosomal subunits, and thus maintains levels of free tRNAs and 50S ribosomes. The protein is Peptidyl-tRNA hydrolase of Leptospira borgpetersenii serovar Hardjo-bovis (strain JB197).